An 891-amino-acid chain; its full sequence is 26S proteasome non-ATPase regulatory subunit 2 homolog A (891 aa).

The tract at residues 1–44 (MAPTQDPNSVGGGAKKDEATLKVPSKDPKKKDEKKDEDLSEEDL) is disordered. Positions 14–21 (AKKDEATL) match the Nuclear localization signal motif. Basic and acidic residues predominate over residues 14 to 37 (AKKDEATLKVPSKDPKKKDEKKDE). Lys218 is covalently cross-linked (Glycyl lysine isopeptide (Lys-Gly) (interchain with G-Cter in ubiquitin)). Thr219 is subject to O-acetylthreonine. 7 PC repeats span residues 414 to 447 (SAAA…PIIA), 448 to 484 (GALL…SVRI), 485 to 519 (GAIM…PLDV), 522 to 556 (FASL…AELG), 565 to 594 (LGLG…KIRK), 674 to 705 (LALG…EVAM), and 724 to 739 (AGML…KDMS).

This sequence belongs to the proteasome subunit S2 family. As to quaternary structure, component of the 19S regulatory particle (RP/PA700) base subcomplex of the 26S proteasome. The 26S proteasome is composed of a core protease (CP), known as the 20S proteasome, capped at one or both ends by the 19S regulatory particle (RP/PA700). The RP/PA700 complex is composed of at least 17 different subunits in two subcomplexes, the base and the lid, which form the portions proximal and distal to the 20S proteolytic core, respectively. Interacts with JMJ27. In terms of tissue distribution, expressed in stems, leaves, buds, flowers, siliques and developing seeds.

Its subcellular location is the nucleus. The protein resides in the cytoplasm. Its function is as follows. Acts as a regulatory subunit of the 26 proteasome which is involved in the ATP-dependent degradation of ubiquitinated proteins. Required during embryogenesis. Required for optimal plant growth and stress responses. Required for innate immunity. Prevents JMJ27 accumulation in non-drought conditions. The protein is 26S proteasome non-ATPase regulatory subunit 2 homolog A of Arabidopsis thaliana (Mouse-ear cress).